A 473-amino-acid chain; its full sequence is Serine palmitoyltransferase 1 (473 aa).

Over 1–15 (MATATEQWVLVEMVQ) the chain is Lumenal. Residues 1–66 (MATATEQWVL…KEELIEEWQP (66 aa)) are interaction with SPTLC2. The helical transmembrane segment at 16-36 (ALYEAPAYHLILEGILILWII) threads the bilayer. Topologically, residues 37 to 473 (RLLFSKTYKL…IKEVAQAVLL (437 aa)) are cytoplasmic. A Phosphotyrosine; by ABL modification is found at Tyr-164.

The protein belongs to the class-II pyridoxal-phosphate-dependent aminotransferase family. As to quaternary structure, component of the serine palmitoyltransferase (SPT) complex, which is also composed of SPTLC2 or SPTLC3 and SPTSSA or SPTSSB. The heterodimer with SPTLC2 or SPTLC3 forms the catalytic core of the enzyme, while SPTSSA or SPTSSB subunits determine substrate specificity. SPT also interacts with ORMDL proteins, especially ORMDL3, which negatively regulate SPT activity in the presence of ceramides. Forms dimers of heterodimers with SPTLC2. Interacts with RTN4. It depends on pyridoxal 5'-phosphate as a cofactor. In terms of processing, phosphorylation at Tyr-164 inhibits activity and promotes cell survival.

It localises to the endoplasmic reticulum membrane. It carries out the reaction L-serine + hexadecanoyl-CoA + H(+) = 3-oxosphinganine + CO2 + CoA. The enzyme catalyses octadecanoyl-CoA + L-serine + H(+) = 3-oxoeicosasphinganine + CO2 + CoA. It catalyses the reaction tetradecanoyl-CoA + L-serine + H(+) = 3-oxohexadecasphinganine + CO2 + CoA. The catalysed reaction is dodecanoyl-CoA + L-serine + H(+) = 3-oxotetradecasphinganine + CO2 + CoA. It participates in lipid metabolism; sphingolipid metabolism. Its activity is regulated as follows. SPT complex catalytic activity is negatively regulated by ORMDL proteins, including ORMDL3, in the presence of ceramides. This mechanism allows to maintain ceramide levels at sufficient concentrations for the production of complex sphingolipids, but which prevents the accumulation of ceramides to levels that trigger apoptosis. Its function is as follows. Component of the serine palmitoyltransferase multisubunit enzyme (SPT) that catalyzes the initial and rate-limiting step in sphingolipid biosynthesis by condensing L-serine and activated acyl-CoA (most commonly palmitoyl-CoA) to form long-chain bases. The SPT complex is also composed of SPTLC2 or SPTLC3 and SPTSSA or SPTSSB. Within this complex, the heterodimer with SPTLC2 or SPTLC3 forms the catalytic core. The composition of the serine palmitoyltransferase (SPT) complex determines the substrate preference. The SPTLC1-SPTLC2-SPTSSA complex shows a strong preference for C16-CoA substrate, while the SPTLC1-SPTLC3-SPTSSA isozyme uses both C14-CoA and C16-CoA as substrates, with a slight preference for C14-CoA. The SPTLC1-SPTLC2-SPTSSB complex shows a strong preference for C18-CoA substrate, while the SPTLC1-SPTLC3-SPTSSB isozyme displays an ability to use a broader range of acyl-CoAs, without apparent preference. Required for adipocyte cell viability and metabolic homeostasis. This is Serine palmitoyltransferase 1 (SPTLC1) from Macaca fascicularis (Crab-eating macaque).